Reading from the N-terminus, the 142-residue chain is Large ribosomal subunit protein uL13 (142 aa).

This sequence belongs to the universal ribosomal protein uL13 family. In terms of assembly, part of the 50S ribosomal subunit.

Functionally, this protein is one of the early assembly proteins of the 50S ribosomal subunit, although it is not seen to bind rRNA by itself. It is important during the early stages of 50S assembly. This is Large ribosomal subunit protein uL13 from Burkholderia pseudomallei (strain 1106a).